The primary structure comprises 345 residues: Anthranilate phosphoribosyltransferase (345 aa).

5-phospho-alpha-D-ribose 1-diphosphate-binding positions include G80, 83–84 (GD), T88, 90–93 (NIST), 108–116 (KHGNRSVSS), and S120. G80 lines the anthranilate pocket. Residue S92 coordinates Mg(2+). N111 is an anthranilate binding site. R166 is an anthranilate binding site. Mg(2+)-binding residues include D225 and E226.

It belongs to the anthranilate phosphoribosyltransferase family. As to quaternary structure, homodimer. Requires Mg(2+) as cofactor.

The catalysed reaction is N-(5-phospho-beta-D-ribosyl)anthranilate + diphosphate = 5-phospho-alpha-D-ribose 1-diphosphate + anthranilate. It participates in amino-acid biosynthesis; L-tryptophan biosynthesis; L-tryptophan from chorismate: step 2/5. Catalyzes the transfer of the phosphoribosyl group of 5-phosphorylribose-1-pyrophosphate (PRPP) to anthranilate to yield N-(5'-phosphoribosyl)-anthranilate (PRA). The protein is Anthranilate phosphoribosyltransferase of Desulforamulus reducens (strain ATCC BAA-1160 / DSM 100696 / MI-1) (Desulfotomaculum reducens).